Here is a 432-residue protein sequence, read N- to C-terminus: Bifunctional IPC transferase and DIPP synthase (432 aa).

The mobA-like NTP transferase stretch occupies residues P3–A225. CTP-binding positions include L9 to A11, K22, and E113. E113 contributes to the Mg(2+) binding site. Residues V226–V426 are CDP-alcohol phosphatidyltransferases. Transmembrane regions (helical) follow at residues F264 to L284, I337 to T356, and V385 to L405.

In the N-terminal section; belongs to the MobA family. It in the C-terminal section; belongs to the CDP-alcohol phosphatidyltransferase class-I family. Mg(2+) is required as a cofactor.

It localises to the membrane. It carries out the reaction 1D-myo-inositol 3-phosphate + CTP + H(+) = CDP-1L-myo-inositol + diphosphate. The catalysed reaction is CDP-1L-myo-inositol + 1D-myo-inositol 3-phosphate = bis(1L-myo-inositol) 3,1'-phosphate 1-phosphate + CMP + H(+). Its function is as follows. Involved in biosynthesis of di-myo-inositol phosphate (DIP), a widespread organic solute in microorganisms adapted to hot environments. Catalyzes the condensation of CTP and L-myo-inositol-1-phosphate into CDP-L-myo-inositol, as well as the biosynthesis of di-myo-inositol-1,3'-phosphate-1'-phosphate (DIPP) from CDP-L-myo-inositol and L-myo-inositol-1-phosphate. The protein is Bifunctional IPC transferase and DIPP synthase of Thermococcus kodakarensis (strain ATCC BAA-918 / JCM 12380 / KOD1) (Pyrococcus kodakaraensis (strain KOD1)).